The sequence spans 510 residues: MAFQVLFICLISTIVFASILWRKQNKNKTLLPPSPMPLPIIGHLHLLSPTPHQDFHKLSLRYGPIIHLFLGSVPCVVASTAEAAKEFLKTHEPAFSNRPANTVAVETLTYGFQDFLFAPYGPYWKFMKKLCMSELLGGHMLDQFLPVRQXETKKFIKRVLQKGISGEAVDFGGEFITLSNNIVSRMIVSQTSTTEDENEVEEMRKLVKDAAELSGKFNISDFVSFLKRFDLQGFNKRLEKIRDCFDTVLDRIIKQREEERRNKNETVGKREFKDMLDVLFDISEDESSEIKLNKENIKAFILDILIAGTDTSAVTMEWAMAELINNPGVLEKARQEMDAVVGKSRIVEESDIANLPYLQGIVRETLRLHPAGPLLFRESSRRAVVCGYDIPAKTRLFVNVWAIGRDPNHWENPLEFRPERFVENGKSQLDVRGQHYHLLPFGSGRRACPGTSLALQVVHVNLAVLIQCFQWKVDCDNGKVNMEEKAGITLPRAHPIICVPIRRLNPFPVV.

Residues 64–84 (PIIHLFLGSVPCVVASTAEAA) form a helical membrane-spanning segment. C448 is a binding site for heme.

It belongs to the cytochrome P450 family. The cofactor is heme.

It is found in the membrane. This is Cytochrome P450 93A3 (CYP93A3) from Glycine max (Soybean).